Consider the following 183-residue polypeptide: UPF0725 protein At4g11700 (183 aa).

It belongs to the UPF0725 (EMB2204) family.

The chain is UPF0725 protein At4g11700 from Arabidopsis thaliana (Mouse-ear cress).